The primary structure comprises 1273 residues: DNA-directed RNA polymerase subunit beta (1273 aa).

Positions 1252–1273 are disordered; sequence ADDQDLVVSSNDEEVSENDERS.

This sequence belongs to the RNA polymerase beta chain family. The RNAP catalytic core consists of 2 alpha, 1 beta, 1 beta' and 1 omega subunit. When a sigma factor is associated with the core the holoenzyme is formed, which can initiate transcription.

The enzyme catalyses RNA(n) + a ribonucleoside 5'-triphosphate = RNA(n+1) + diphosphate. DNA-dependent RNA polymerase catalyzes the transcription of DNA into RNA using the four ribonucleoside triphosphates as substrates. This chain is DNA-directed RNA polymerase subunit beta, found in Dehalococcoides mccartyi (strain ATCC BAA-2100 / JCM 16839 / KCTC 5957 / BAV1).